We begin with the raw amino-acid sequence, 898 residues long: Transportin-1 (898 aa).

HEAT repeat units lie at residues 19-46 (GLQQ…QKLE), 51-89 (YPDF…AHFQ), 98-131 (FIKS…KGEL), 137-174 (LLPK…LDSD), 181-211 (NIMI…QFII), 224-251 (FIEN…VMLL), 263-290 (HNIV…FWLT), 306-397 (PKLI…LANV), 405-433 (HILP…GAIA), 445-472 (PELI…TLSR), 486-519 (LKPL…EEEA), 527-560 (LAYI…ADSV), 568-606 (EYIQ…TALQ), 614-665 (EPVY…GLGG), 676-707 (ILTL…KACF), 715-748 (ADFM…IQMG), 756-791 (PMVL…YVCP), 799-832 (QQFI…ISVN), 841-872 (IFFC…KNQV), and 875-895 (ENWR…LAAF). An Importin N-terminal domain is found at 41 to 109 (VQQKLEQLNQ…KSECLNNIGD (69 aa)). The disordered stretch occupies residues 347-374 (FHRSRTVAQQHEEDGIEEEDDDDDEIDD). Residues 360–374 (DGIEEEDDDDDEIDD) are compositionally biased toward acidic residues.

The protein belongs to the importin beta family. Importin beta-2 subfamily. In terms of assembly, identified in a complex that contains TNPO1, RAN and RANBP1. Binds HNRPA1, HNRPA2, HNRNPDL, RPS7, RPL5 and RAN. Interacts with H2A, H2B, H3 and H4 histones. Interacts with isoform 1 and isoform 5 of ADAR/ADAR1 (via DRBM 3 domain). Interacts with SNAI1 (via zinc fingers); the interaction mediates SNAI1 nuclear import. Interacts with SNAI2 (via zinc fingers). Interacts with RPL23A (via BIB domain) and SRP19; this interaction is involved in RPL23A and SRP19 import into the nucleus. Interacts (via HEAT repeats 8-12) with BAP1 (via non-classical PY-NLS); this interaction is direct, is involved in BAP1 nuclear import and disrupts BAP1 homodimerization.

It localises to the cytoplasm. It is found in the nucleus. In terms of biological role, functions in nuclear protein import as nuclear transport receptor. Serves as receptor for nuclear localization signals (NLS) in cargo substrates. May mediate docking of the importin/substrate complex to the nuclear pore complex (NPC) through binding to nucleoporin and the complex is subsequently translocated through the pore by an energy requiring, Ran-dependent mechanism. At the nucleoplasmic side of the NPC, Ran binds to the importin, the importin/substrate complex dissociates and importin is re-exported from the nucleus to the cytoplasm where GTP hydrolysis releases Ran. The directionality of nuclear import is thought to be conferred by an asymmetric distribution of the GTP- and GDP-bound forms of Ran between the cytoplasm and nucleus. Involved in nuclear import of M9-containing proteins. In vitro, binds directly to the M9 region of the heterogeneous nuclear ribonucleoproteins (hnRNP), A1 and A2 and mediates their nuclear import. Involved in hnRNP A1/A2 nuclear export. Mediates the nuclear import of ribosomal proteins RPL23A, RPS7 and RPL5. In vitro, mediates nuclear import of SRP19. Mediates the import of histones H2A, H2B, H3 and H4. Mediates nuclear import of ADAR/ADAR1 in a RanGTP-dependent manner. Main mediator of PR-DUB complex component BAP1 nuclear import; acts redundantly with the karyopherins KPNA1 and KPNA2. The polypeptide is Transportin-1 (Tnpo1) (Mus musculus (Mouse)).